A 234-amino-acid polypeptide reads, in one-letter code: Glutamine synthetase (234 aa).

A GS catalytic domain is found at K1–L234. Residues G126 to R157 form a disordered region.

The protein belongs to the glutamine synthetase family. As to quaternary structure, homooctamer.

It localises to the cytoplasm. The enzyme catalyses L-glutamate + NH4(+) + ATP = L-glutamine + ADP + phosphate + H(+). The protein is Glutamine synthetase of Dunaliella salina (Green alga).